The primary structure comprises 347 residues: Protein RecA (347 aa).

Position 65-72 (65-72 (GPESSGKT)) interacts with ATP. Positions 328 to 347 (SPAQPEAPAAGEKPEQEEEF) are disordered.

The protein belongs to the RecA family.

It is found in the cytoplasm. Functionally, can catalyze the hydrolysis of ATP in the presence of single-stranded DNA, the ATP-dependent uptake of single-stranded DNA by duplex DNA, and the ATP-dependent hybridization of homologous single-stranded DNAs. It interacts with LexA causing its activation and leading to its autocatalytic cleavage. The polypeptide is Protein RecA (Vibrio parahaemolyticus serotype O3:K6 (strain RIMD 2210633)).